Here is a 226-residue protein sequence, read N- to C-terminus: UPF0758 protein PsycPRwf_0491 (226 aa).

The MPN domain occupies 102–224 (SLNRSQVVKD…TLSFAETATA (123 aa)). Residues H173, H175, and D186 each contribute to the Zn(2+) site. The JAMM motif signature appears at 173-186 (HNHPNQDATPSAAD).

Belongs to the UPF0758 family.

This Psychrobacter sp. (strain PRwf-1) protein is UPF0758 protein PsycPRwf_0491.